Consider the following 307-residue polypeptide: Ornithine carbamoyltransferase (307 aa).

Carbamoyl phosphate contacts are provided by residues 50-53, glutamine 77, arginine 101, and 128-131; these read STRT and HPCQ. L-ornithine contacts are provided by residues asparagine 160, aspartate 224, and 228–229; that span reads SM. Residues 264 to 265 and arginine 292 each bind carbamoyl phosphate; that span reads CL.

This sequence belongs to the aspartate/ornithine carbamoyltransferase superfamily. OTCase family. As to quaternary structure, homotrimer.

Its subcellular location is the cytoplasm. The catalysed reaction is carbamoyl phosphate + L-ornithine = L-citrulline + phosphate + H(+). Its pathway is amino-acid biosynthesis; L-arginine biosynthesis; L-arginine from L-ornithine and carbamoyl phosphate: step 1/3. Functionally, reversibly catalyzes the transfer of the carbamoyl group from carbamoyl phosphate (CP) to the N(epsilon) atom of ornithine (ORN) to produce L-citrulline, which is a substrate for argininosuccinate synthetase, the enzyme involved in the final step in arginine biosynthesis. The protein is Ornithine carbamoyltransferase (argF) of Mycobacterium bovis (strain ATCC BAA-935 / AF2122/97).